The chain runs to 215 residues: Large ribosomal subunit protein uL4 (215 aa).

The segment at 46–72 (TAKSKNRAEVSGGGRKPWAQKGGGRAR) is disordered. A compositionally biased stretch (gly residues) spans 56 to 71 (SGGGRKPWAQKGGGRA).

Belongs to the universal ribosomal protein uL4 family. In terms of assembly, part of the 50S ribosomal subunit.

Its function is as follows. One of the primary rRNA binding proteins, this protein initially binds near the 5'-end of the 23S rRNA. It is important during the early stages of 50S assembly. It makes multiple contacts with different domains of the 23S rRNA in the assembled 50S subunit and ribosome. Functionally, forms part of the polypeptide exit tunnel. The chain is Large ribosomal subunit protein uL4 from Helicobacter pylori (strain J99 / ATCC 700824) (Campylobacter pylori J99).